Here is a 101-residue protein sequence, read N- to C-terminus: Protein translation factor SUI1 homolog (101 aa).

It belongs to the SUI1 family.

The protein is Protein translation factor SUI1 homolog of Methanosphaera stadtmanae (strain ATCC 43021 / DSM 3091 / JCM 11832 / MCB-3).